Reading from the N-terminus, the 97-residue chain is Aspartyl/glutamyl-tRNA(Asn/Gln) amidotransferase subunit C (97 aa).

The protein belongs to the GatC family. In terms of assembly, heterotrimer of A, B and C subunits.

The enzyme catalyses L-glutamyl-tRNA(Gln) + L-glutamine + ATP + H2O = L-glutaminyl-tRNA(Gln) + L-glutamate + ADP + phosphate + H(+). It catalyses the reaction L-aspartyl-tRNA(Asn) + L-glutamine + ATP + H2O = L-asparaginyl-tRNA(Asn) + L-glutamate + ADP + phosphate + 2 H(+). Its function is as follows. Allows the formation of correctly charged Asn-tRNA(Asn) or Gln-tRNA(Gln) through the transamidation of misacylated Asp-tRNA(Asn) or Glu-tRNA(Gln) in organisms which lack either or both of asparaginyl-tRNA or glutaminyl-tRNA synthetases. The reaction takes place in the presence of glutamine and ATP through an activated phospho-Asp-tRNA(Asn) or phospho-Glu-tRNA(Gln). This Synechococcus sp. (strain CC9311) protein is Aspartyl/glutamyl-tRNA(Asn/Gln) amidotransferase subunit C.